We begin with the raw amino-acid sequence, 306 residues long: Glutaminase (306 aa).

Positions 64, 115, 159, 166, 190, 242, and 260 each coordinate substrate.

The protein belongs to the glutaminase family. In terms of assembly, homotetramer.

It carries out the reaction L-glutamine + H2O = L-glutamate + NH4(+). In Aliivibrio fischeri (strain MJ11) (Vibrio fischeri), this protein is Glutaminase.